Consider the following 166-residue polypeptide: Ribonuclease H (166 aa).

The RNase H type-1 domain occupies 5 to 147 (PRKRVALFTD…VDREARRQAQ (143 aa)). Residues D14, E52, D74, and D139 each coordinate Mg(2+). A disordered region spans residues 128–166 (GHTGHPENERVDREARRQAQSQAKTPCPPQAPTLFHEEA). A compositionally biased stretch (basic and acidic residues) spans 131 to 144 (GHPENERVDREARR).

The protein belongs to the RNase H family. In terms of assembly, monomer. Requires Mg(2+) as cofactor.

The protein resides in the cytoplasm. It carries out the reaction Endonucleolytic cleavage to 5'-phosphomonoester.. Its function is as follows. Endonuclease that specifically degrades the RNA of RNA-DNA hybrids. In Thermus thermophilus (strain ATCC BAA-163 / DSM 7039 / HB27), this protein is Ribonuclease H.